The primary structure comprises 158 residues: Protein-export protein SecB (158 aa).

This sequence belongs to the SecB family. As to quaternary structure, homotetramer, a dimer of dimers. One homotetramer interacts with 1 SecA dimer.

It localises to the cytoplasm. Functionally, one of the proteins required for the normal export of preproteins out of the cell cytoplasm. It is a molecular chaperone that binds to a subset of precursor proteins, maintaining them in a translocation-competent state. It also specifically binds to its receptor SecA. In Photorhabdus laumondii subsp. laumondii (strain DSM 15139 / CIP 105565 / TT01) (Photorhabdus luminescens subsp. laumondii), this protein is Protein-export protein SecB.